The chain runs to 358 residues: MSKRVFNFYPGPCTLPLPVLQQAQKELLDFEGCGMSVMEISHRSQRFEAILAETLSLAKKLIGAPDDFCVLLIAGGAHQQFAMTALNLLADGGSAGIVNSGLWAKRALEEAQRVGKMVELWRAPDGKCTTLPDLKTLTVPKNLRYVHLTSNETVDGLQFPELPDLGVPLVLDVSSDYYTRPLPWDYCDIVYGGVQKNLAPSGMALVFVRKQCLREHTNLARFFCYKHHADANSLLNTPPTWQIYILHLVLKWIEQQGGVAHFAALAQKRSAKLYDFIDNNDFYRNDVEKKYRSKINVVMRTPSDALDTQFWQEAETHALVGLKGHSAVGGLRASLYNAMEMAGVEALIDFMHDFAQRH.

Residue Arg-43 participates in L-glutamate binding. Pyridoxal 5'-phosphate-binding residues include Trp-103, Thr-153, Asp-172, and Gln-195. Position 196 is an N6-(pyridoxal phosphate)lysine (Lys-196). A pyridoxal 5'-phosphate-binding site is contributed by 236 to 237 (NT).

The protein belongs to the class-V pyridoxal-phosphate-dependent aminotransferase family. SerC subfamily. In terms of assembly, homodimer. Pyridoxal 5'-phosphate serves as cofactor.

It localises to the cytoplasm. The catalysed reaction is O-phospho-L-serine + 2-oxoglutarate = 3-phosphooxypyruvate + L-glutamate. It catalyses the reaction 4-(phosphooxy)-L-threonine + 2-oxoglutarate = (R)-3-hydroxy-2-oxo-4-phosphooxybutanoate + L-glutamate. Its pathway is amino-acid biosynthesis; L-serine biosynthesis; L-serine from 3-phospho-D-glycerate: step 2/3. The protein operates within cofactor biosynthesis; pyridoxine 5'-phosphate biosynthesis; pyridoxine 5'-phosphate from D-erythrose 4-phosphate: step 3/5. In terms of biological role, catalyzes the reversible conversion of 3-phosphohydroxypyruvate to phosphoserine and of 3-hydroxy-2-oxo-4-phosphonooxybutanoate to phosphohydroxythreonine. The sequence is that of Phosphoserine aminotransferase from Dichelobacter nodosus (strain VCS1703A).